Here is a 111-residue protein sequence, read N- to C-terminus: Thioredoxin 2 (111 aa).

Residues 2-109 (SKGVITITDA…LLSFLDTHLN (108 aa)) form the Thioredoxin domain. The cysteines at positions 33 and 36 are disulfide-linked.

It belongs to the thioredoxin family.

Participates in various redox reactions through the reversible oxidation of its active center dithiol to a disulfide and catalyzes dithiol-disulfide exchange reactions. This chain is Thioredoxin 2 (trxB), found in Nostoc sp. (strain PCC 7120 / SAG 25.82 / UTEX 2576).